A 174-amino-acid polypeptide reads, in one-letter code: Gamma-crystallin C (174 aa).

2 Beta/gamma crystallin 'Greek key' domains span residues 2–40 (GKIT…RVES) and 41–83 (GCWM…CLIP). Cys-23 is modified (S-methylcysteine). Residues 84–87 (QTVS) form a connecting peptide region. 2 Beta/gamma crystallin 'Greek key' domains span residues 88-128 (HRLR…HVLE) and 129-171 (GCWV…RRVV).

Belongs to the beta/gamma-crystallin family. In terms of assembly, monomer.

Functionally, crystallins are the dominant structural components of the vertebrate eye lens. The chain is Gamma-crystallin C (CRYGC) from Homo sapiens (Human).